Reading from the N-terminus, the 495-residue chain is Probable leucine aminopeptidase 2 (495 aa).

The signal sequence occupies residues 1 to 21 (MKSQLLSLAVAVTTISQGVVG). One can recognise a PA domain in the interval 130 to 216 (MAELVVAKNN…SQEDGKNLAT (87 aa)). Residues N142 and N235 are each glycosylated (N-linked (GlcNAc...) asparagine). Residues H259 and D271 each contribute to the Zn(2+) site. A glycan (N-linked (GlcNAc...) asparagine) is linked at N272. The Proton acceptor role is filled by E303. Zn(2+) contacts are provided by E304 and D332. Residue N352 is glycosylated (N-linked (GlcNAc...) asparagine). H430 contacts Zn(2+).

The protein belongs to the peptidase M28 family. M28A subfamily. Monomer. It depends on Zn(2+) as a cofactor.

The protein localises to the secreted. Functionally, extracellular aminopeptidase that releases a wide variety of amino acids from natural peptides and contributes to pathogenicity. This chain is Probable leucine aminopeptidase 2 (LAP2), found in Trichophyton verrucosum (strain HKI 0517).